Here is a 525-residue protein sequence, read N- to C-terminus: Chromosomal replication initiator protein DnaA (525 aa).

The segment at 1–71 (MNDFWQHCSA…SDLAREFWNT (71 aa)) is domain I, interacts with DnaA modulators. The interval 71–188 (TPIEVQFVLD…GEADSMYERS (118 aa)) is domain II. The disordered stretch occupies residues 160–182 (AAAGRRTWRPGPGAAPANGGEAD). Over residues 169-181 (PGPGAAPANGGEA) the composition is skewed to low complexity. The segment at 189–405 (KLNPVLTFDN…GALRKILAYS (217 aa)) is domain III, AAA+ region. The ATP site is built by Gly233, Gly235, Lys236, and Thr237. The tract at residues 406–525 (KFHGREISIE…LHVLEQTLKG (120 aa)) is domain IV, binds dsDNA.

This sequence belongs to the DnaA family. In terms of assembly, oligomerizes as a right-handed, spiral filament on DNA at oriC.

The protein resides in the cytoplasm. Functionally, plays an essential role in the initiation and regulation of chromosomal replication. ATP-DnaA binds to the origin of replication (oriC) to initiate formation of the DNA replication initiation complex once per cell cycle. Binds the DnaA box (a 9 base pair repeat at the origin) and separates the double-stranded (ds)DNA. Forms a right-handed helical filament on oriC DNA; dsDNA binds to the exterior of the filament while single-stranded (ss)DNA is stabiized in the filament's interior. The ATP-DnaA-oriC complex binds and stabilizes one strand of the AT-rich DNA unwinding element (DUE), permitting loading of DNA polymerase. After initiation quickly degrades to an ADP-DnaA complex that is not apt for DNA replication. Binds acidic phospholipids. The chain is Chromosomal replication initiator protein DnaA from Burkholderia orbicola (strain MC0-3).